The following is a 198-amino-acid chain: Dynein light chain Tctex-type protein 2 (198 aa).

Residues 1 to 34 are disordered; that stretch reads MEKRGRGVKSSPIQTPNQTPQQAPVTPRKERRPS. The span at 11–24 shows a compositional bias: polar residues; sequence SPIQTPNQTPQQAP.

It belongs to the dynein light chain Tctex-type family. In terms of assembly, interacts with CCDC159. Interacts with CSNK2B. As to expression, expressed predominantly in testis. Also expressed in brain, lung and trachea.

Its subcellular location is the cytoplasm. It is found in the cytoskeleton. The protein resides in the cytoplasmic granule. The protein localises to the membrane. May be an accessory component of axonemal dynein and cytoplasmic dynein 1. Candidate for involvement in male sterility. The polypeptide is Dynein light chain Tctex-type protein 2 (Homo sapiens (Human)).